Reading from the N-terminus, the 296-residue chain is Solute carrier protein FPSE_08119 (296 aa).

3 helical membrane passes run Gly-12 to Ala-32, Ala-122 to Ile-142, and Ala-219 to Val-239. Solcar repeat units lie at residues Leu-16–Glu-102, Leu-114–Gln-205, and Ser-213–Ser-296.

This sequence belongs to the mitochondrial carrier (TC 2.A.29) family.

Its subcellular location is the mitochondrion inner membrane. Solute carrier protein; part of the Fusarium detoxification of benzoxazolinone cluster involved in the degradation of benzoxazolinones produced by the host plant. Maize, wheat, and rye produce the 2 benzoxazinone phytoanticipins 2,4-dihy-droxy-7-methoxy-1,4-benzoxazin-3-one (DIMBOA) and 2,4-dihydroxy-1,4-benzoxazin-3-one (DIBOA) that, due to their inherent instability once released, spontaneously degrade to the more stable corresponding benzoxazolinones, 6-methoxy-2-benzoxazolinone (MBOA) and 2-benzoxazolinone (BOA), respectively. The sequence is that of Solute carrier protein FPSE_08119 from Fusarium pseudograminearum (strain CS3096) (Wheat and barley crown-rot fungus).